A 452-amino-acid chain; its full sequence is GTPase Der (452 aa).

EngA-type G domains are found at residues 9 to 170 (KIIA…PEED) and 185 to 362 (LQIV…KTWN). Residues 15 to 22 (GRPNVGKS), 62 to 66 (DTPGF), 124 to 127 (NKCE), 191 to 198 (GRPNAGKS), 238 to 242 (DTAGL), and 303 to 306 (NKWD) contribute to the GTP site. Residues 363-448 (KKITTSKLNE…PIRFNYIKTK (86 aa)) enclose the KH-like domain.

The protein belongs to the TRAFAC class TrmE-Era-EngA-EngB-Septin-like GTPase superfamily. EngA (Der) GTPase family. In terms of assembly, associates with the 50S ribosomal subunit.

Its function is as follows. GTPase that plays an essential role in the late steps of ribosome biogenesis. This is GTPase Der from Rickettsia bellii (strain OSU 85-389).